Here is a 314-residue protein sequence, read N- to C-terminus: tRNA dimethylallyltransferase 1 (314 aa).

8–15 (GPTGTGKS) lines the ATP pocket. 10–15 (TGTGKS) provides a ligand contact to substrate.

The protein belongs to the IPP transferase family. As to quaternary structure, monomer. Mg(2+) is required as a cofactor.

The enzyme catalyses adenosine(37) in tRNA + dimethylallyl diphosphate = N(6)-dimethylallyladenosine(37) in tRNA + diphosphate. Functionally, catalyzes the transfer of a dimethylallyl group onto the adenine at position 37 in tRNAs that read codons beginning with uridine, leading to the formation of N6-(dimethylallyl)adenosine (i(6)A). This chain is tRNA dimethylallyltransferase 1, found in Mycobacterium marinum (strain ATCC BAA-535 / M).